The primary structure comprises 65 residues: Seminal plasma acrosin inhibitor A1 (65 aa).

The Kazal-like domain occupies 1–59 (TRKQPNCNVYRSHLFFCTRQMDPICGTNGKSYANPCIFCSEKGLRNQKFDFGHWGHCRE). 3 disulfide bridges follow: cysteine 7–cysteine 39, cysteine 17–cysteine 36, and cysteine 25–cysteine 57. An O-linked (GalNAc...) serine glycan is attached at serine 12. Serine 62 carries O-linked (GalNAc...) serine glycosylation.

In terms of processing, the identity of the O-linked saccharides are not reported in Ref.1. The O-linked polysaccharides on Ser-12 and Ser-62 are probably the mucin type linked to GalNAc. As to expression, seminal plasma.

It is found in the secreted. Its function is as follows. Inhibits acrosin. The sequence is that of Seminal plasma acrosin inhibitor A1 from Sus scrofa (Pig).